Reading from the N-terminus, the 1147-residue chain is Probable phospholipid-transporting ATPase IIB (1147 aa).

Residues 1-146 (MADQIPLYPV…NQKYNVFTFI (146 aa)) lie on the Cytoplasmic side of the membrane. The helical transmembrane segment at 147–168 (PGVLYEQFKFFLNLYFLVISCS) threads the bilayer. Over 169–173 (QFVPA) the chain is Extracellular. A helical membrane pass occupies residues 174–196 (LKIGYLYTYWAPLGFVLAVTMTR). Residues 197–380 (EAIDEFRRFQ…GLLDLELNRL (184 aa)) are Cytoplasmic-facing. A helical membrane pass occupies residues 381–401 (TKALFLALVALSIVMVTLQGF). At 402–409 (VGPWYRNL) the chain is on the extracellular side. A helical transmembrane segment spans residues 410-431 (FRFLLLFSYIIPISLRVNLDMG). The Cytoplasmic portion of the chain corresponds to 432–930 (KAVYGWMMMK…GRNSYKRSAA (499 aa)). The active-site 4-aspartylphosphate intermediate is the D468. Positions 468, 469, and 470 each coordinate ATP. Residue D468 participates in Mg(2+) binding. T470 contacts Mg(2+). The segment at 503-535 (RDSYSQMQSQAGGNNTGSTPLRKAQSSAPKVRK) is disordered. Residues 505–530 (SYSQMQSQAGGNNTGSTPLRKAQSSA) are compositionally biased toward polar residues. Positions 591, 633, 638, 657, 686, 687, 766, 767, 768, 848, and 854 each coordinate ATP. D874 provides a ligand contact to Mg(2+). N877 and D878 together coordinate ATP. D878 provides a ligand contact to Mg(2+). Residues 931–951 (LGQFVMHRGLIISTMQAVFSS) form a helical membrane-spanning segment. The Extracellular portion of the chain corresponds to 952-963 (VFYFASVPLYQG). A helical transmembrane segment spans residues 964–982 (FLMVGYATIYTMFPVFSLV). Topologically, residues 983-1012 (LDQDVKPEMAMLYPELYKDLTKGRSLSFKT) are cytoplasmic. The helical transmembrane segment at 1013 to 1031 (FLIWVLISIYQGGILMYGA) threads the bilayer. Topologically, residues 1032-1038 (LVLFESE) are extracellular. Residues 1039–1061 (FVHVVAISFTALILTELLMVALT) traverse the membrane as a helical segment. Residues 1062-1067 (VRTWHW) lie on the Cytoplasmic side of the membrane. The chain crosses the membrane as a helical span at residues 1068-1088 (LMVVAEFLSLGCYVSSLAFLN). The Extracellular segment spans residues 1089 to 1105 (EYFGIGRVSFGAFLDVA). The helical transmembrane segment at 1106 to 1130 (FITTVTFLWKVSAITVVSCLPLYVL) threads the bilayer. The Cytoplasmic portion of the chain corresponds to 1131-1147 (KYLRRKLSPPSYCKLAS).

The protein belongs to the cation transport ATPase (P-type) (TC 3.A.3) family. Type IV subfamily. It depends on Mg(2+) as a cofactor.

The protein resides in the golgi apparatus. The protein localises to the trans-Golgi network membrane. The enzyme catalyses ATP + H2O + phospholipidSide 1 = ADP + phosphate + phospholipidSide 2.. This Homo sapiens (Human) protein is Probable phospholipid-transporting ATPase IIB (ATP9B).